Reading from the N-terminus, the 315-residue chain is Lipoyl synthase (315 aa).

7 residues coordinate [4Fe-4S] cluster: cysteine 62, cysteine 67, cysteine 73, cysteine 88, cysteine 92, cysteine 95, and serine 302. The Radical SAM core domain maps to 74 to 291; the sequence is FGKGTATFMI…ETEALAMGFK (218 aa).

This sequence belongs to the radical SAM superfamily. Lipoyl synthase family. The cofactor is [4Fe-4S] cluster.

It localises to the cytoplasm. It catalyses the reaction [[Fe-S] cluster scaffold protein carrying a second [4Fe-4S](2+) cluster] + N(6)-octanoyl-L-lysyl-[protein] + 2 oxidized [2Fe-2S]-[ferredoxin] + 2 S-adenosyl-L-methionine + 4 H(+) = [[Fe-S] cluster scaffold protein] + N(6)-[(R)-dihydrolipoyl]-L-lysyl-[protein] + 4 Fe(3+) + 2 hydrogen sulfide + 2 5'-deoxyadenosine + 2 L-methionine + 2 reduced [2Fe-2S]-[ferredoxin]. The protein operates within protein modification; protein lipoylation via endogenous pathway; protein N(6)-(lipoyl)lysine from octanoyl-[acyl-carrier-protein]: step 2/2. Functionally, catalyzes the radical-mediated insertion of two sulfur atoms into the C-6 and C-8 positions of the octanoyl moiety bound to the lipoyl domains of lipoate-dependent enzymes, thereby converting the octanoylated domains into lipoylated derivatives. In Aromatoleum aromaticum (strain DSM 19018 / LMG 30748 / EbN1) (Azoarcus sp. (strain EbN1)), this protein is Lipoyl synthase.